The primary structure comprises 216 residues: Ribose-5-phosphate isomerase A (216 aa).

Substrate-binding positions include 26–29 (TGST), 79–82 (DGAD), and 92–95 (KGGG). Catalysis depends on glutamate 101, which acts as the Proton acceptor. Lysine 119 contacts substrate.

The protein belongs to the ribose 5-phosphate isomerase family. As to quaternary structure, homodimer.

It carries out the reaction aldehydo-D-ribose 5-phosphate = D-ribulose 5-phosphate. It functions in the pathway carbohydrate degradation; pentose phosphate pathway; D-ribose 5-phosphate from D-ribulose 5-phosphate (non-oxidative stage): step 1/1. Its function is as follows. Catalyzes the reversible conversion of ribose-5-phosphate to ribulose 5-phosphate. The polypeptide is Ribose-5-phosphate isomerase A (Legionella pneumophila (strain Paris)).